Reading from the N-terminus, the 1102-residue chain is GPI inositol-deacylase (1102 aa).

Residues 1 to 90 form a disordered region; the sequence is MHRRSSGSPV…NPPDCKSSSV (90 aa). The segment covering 58–70 has biased composition (polar residues); sequence GASTPRSRNSSMW. Asparagine 66 is a glycosylation site (N-linked (GlcNAc...) asparagine). Residues 72-83 show a composition bias toward low complexity; sequence TPPSSSMTSNPP. The chain crosses the membrane as a helical span at residues 121 to 141; that stretch reads PCSILTAFTTLVASIFLFFIL. Residue serine 308 is part of the active site. A run of 2 helical transmembrane segments spans residues 744–764 and 790–810; these read LVMRYRTVFAAFPLLVVALVM and SSLPMLLLAMSLLASSLATST. Asparagine 824 is a glycosylation site (N-linked (GlcNAc...) asparagine). Transmembrane regions (helical) follow at residues 867-887, 914-934, 964-984, 1001-1021, 1033-1053, and 1056-1076; these read VALALIFLLTSIYGFLRSKSG, ILLALVSTVIPYQFAYMVACI, SIFLLMLWILPINALVLLVWA, VLSIMPFVLLVEAMTTGTMIP, MLFFFIAIYSAIYGVSYAYLL, and LTNILAAWLVGIYFSASGFSL.

Belongs to the GPI inositol-deacylase family.

Its subcellular location is the endoplasmic reticulum membrane. Its function is as follows. Involved in inositol deacylation of GPI-anchored proteins which plays important roles in the quality control and ER-associated degradation of GPI-anchored proteins. The chain is GPI inositol-deacylase (bst1) from Aspergillus oryzae (strain ATCC 42149 / RIB 40) (Yellow koji mold).